Reading from the N-terminus, the 200-residue chain is Recombination protein RecR (200 aa).

Residues 57-72 (CRQCRTLTEEELCPQC) form a C4-type zinc finger. The 96-residue stretch at 80-175 (TLLCVVEGPM…ITSRIAHGVP (96 aa)) folds into the Toprim domain.

Belongs to the RecR family.

May play a role in DNA repair. It seems to be involved in an RecBC-independent recombinational process of DNA repair. It may act with RecF and RecO. In Pseudomonas fluorescens (strain SBW25), this protein is Recombination protein RecR.